We begin with the raw amino-acid sequence, 997 residues long: Mannuronan C5-epimerase AlgE5 (997 aa).

7 PbH1 repeats span residues 133 to 155 (DRDV…DPHE), 157 to 179 (TINL…VADF), 180 to 202 (QIGG…NIVT), 204 to 226 (TNDF…VIQR), 257 to 279 (AHDV…RVYG), 280 to 315 (AEDV…GVSG), and 320 to 359 (TTGT…SVSN). Hemolysin-type calcium-binding repeat units lie at residues 388–403 (GTTG…AHET), 406–422 (GLDG…NDIL), 424–439 (GGAG…GADL), 557–573 (GHAG…DDIL), 574–590 (VGGA…GADL), 695–709 (GSAG…AADE), 712–729 (HGGA…ADVF), 828–839 (GSDGNDTLDGGS), 846–862 (GGAG…NDIL), and 864–880 (GGAG…SDIF).

Belongs to the D-mannuronate C5-epimerase family. Ca(2+) serves as cofactor.

The protein localises to the secreted. It carries out the reaction [(1-&gt;4)-beta-D-mannuronosyl](n) = [alginate](n). Its pathway is glycan biosynthesis; alginate biosynthesis. With respect to regulation, inhibited by zinc. Converts beta-D-mannuronic acid (M) to alpha-L-guluronic acid (G), producing a polymer with gel-forming capacity, required for the formation of the cyst coat. The protein is Mannuronan C5-epimerase AlgE5 of Azotobacter vinelandii.